The sequence spans 394 residues: Protein STRICTOSIDINE SYNTHASE-LIKE 1 (394 aa).

A signal peptide spans 1 to 21; it reads MESLLLIAYAFLYLFLLSHEA. The span at 61 to 73 shows a compositional bias: basic and acidic residues; sequence GLEKRPNHSEDNP. Residues 61 to 92 are disordered; sequence GLEKRPNHSEDNPPSRGWTGEPGLDPRGEGPY. Residues Asn-67, Asn-122, and Asn-196 are each glycosylated (N-linked (GlcNAc...) asparagine).

Belongs to the strictosidine synthase family.

It localises to the vacuole. This Arabidopsis thaliana (Mouse-ear cress) protein is Protein STRICTOSIDINE SYNTHASE-LIKE 1.